The following is a 455-amino-acid chain: Serine incorporator 2 (455 aa).

Helical transmembrane passes span 5 to 27, 40 to 57, 96 to 118, 131 to 150, 160 to 182, 202 to 224, 239 to 256, 268 to 290, 317 to 339, 385 to 407, and 422 to 444; these read LGAC…ILCS, LIFT…IIML, AVYR…MLCV, GFWF…AFYI, FYFG…IDFA, YAGL…ALMF, FISL…AAVL, LLQA…SSIP, QWWD…FISL, TYSY…MTLT, and WTAV…WTLV.

The protein belongs to the TDE1 family.

It is found in the cell membrane. The enzyme catalyses a 1,2-diacyl-sn-glycero-3-phospho-L-serine(in) = a 1,2-diacyl-sn-glycero-3-phospho-L-serine(out). It catalyses the reaction a 1,2-diacyl-sn-glycero-3-phosphocholine(in) = a 1,2-diacyl-sn-glycero-3-phosphocholine(out). The catalysed reaction is a 1,2-diacyl-sn-glycero-3-phosphoethanolamine(in) = a 1,2-diacyl-sn-glycero-3-phosphoethanolamine(out). Its function is as follows. Non-ATP-dependent, non-specific lipid transporter for phosphatidylserine, phosphatidylcholine, and phosphatidylethanolamine. Functions as a scramblase that flips lipids in both directions across the membrane. In contrast to SERINC3 and SERINC5, has no effect on HIV-1 particles infectivity. This is Serine incorporator 2 from Homo sapiens (Human).